The primary structure comprises 98 residues: Cystatin-B (98 aa).

The residue at position 1 (Met-1) is an N-acetylmethionine. A Secondary area of contact motif is present at residues 46 to 50 (QVVAG).

It belongs to the cystatin family. In terms of assembly, able to form dimers stabilized by noncovalent forces.

It localises to the cytoplasm. The protein resides in the nucleus. Functionally, this is an intracellular thiol proteinase inhibitor. Tightly binding reversible inhibitor of cathepsins L, H and B. This Pongo pygmaeus (Bornean orangutan) protein is Cystatin-B (CSTB).